A 459-amino-acid chain; its full sequence is Ribulose bisphosphate carboxylase (459 aa).

Residue Asn111 coordinates substrate. Catalysis depends on Lys166, which acts as the Proton acceptor. Substrate is bound at residue Lys168. The Mg(2+) site is built by Lys191, Asp193, and Glu194. Lys191 is subject to N6-carboxylysine. His287 serves as the catalytic Proton acceptor. Residues Arg288, His321, and Ser368 each coordinate substrate.

The protein belongs to the RuBisCO large chain family. Type II subfamily. As to quaternary structure, homodimer. The cofactor is Mg(2+).

The catalysed reaction is 2 (2R)-3-phosphoglycerate + 2 H(+) = D-ribulose 1,5-bisphosphate + CO2 + H2O. It carries out the reaction D-ribulose 1,5-bisphosphate + O2 = 2-phosphoglycolate + (2R)-3-phosphoglycerate + 2 H(+). RuBisCO catalyzes two reactions: the carboxylation of D-ribulose 1,5-bisphosphate, the primary event in carbon dioxide fixation, as well as the oxidative fragmentation of the pentose substrate. Both reactions occur simultaneously and in competition at the same active site. In Cereibacter sphaeroides (Rhodobacter sphaeroides), this protein is Ribulose bisphosphate carboxylase.